Consider the following 1150-residue polypeptide: ATP-dependent helicase/deoxyribonuclease subunit B (1150 aa).

8–15 (GRAGSGKS) is an ATP binding site. The [4Fe-4S] cluster site is built by cysteine 786, cysteine 1106, cysteine 1109, and cysteine 1115.

It belongs to the helicase family. AddB/RexB type 1 subfamily. Heterodimer of AddA and AddB. Requires Mg(2+) as cofactor. The cofactor is [4Fe-4S] cluster.

In terms of biological role, the heterodimer acts as both an ATP-dependent DNA helicase and an ATP-dependent, dual-direction single-stranded exonuclease. Recognizes the chi site generating a DNA molecule suitable for the initiation of homologous recombination. The AddB subunit has 5' -&gt; 3' nuclease activity but not helicase activity. This is ATP-dependent helicase/deoxyribonuclease subunit B from Clostridium botulinum (strain Hall / ATCC 3502 / NCTC 13319 / Type A).